The sequence spans 104 residues: Large ribosomal subunit protein uL24 (104 aa).

The protein belongs to the universal ribosomal protein uL24 family. In terms of assembly, part of the 50S ribosomal subunit.

One of two assembly initiator proteins, it binds directly to the 5'-end of the 23S rRNA, where it nucleates assembly of the 50S subunit. In terms of biological role, one of the proteins that surrounds the polypeptide exit tunnel on the outside of the subunit. This is Large ribosomal subunit protein uL24 from Pseudomonas entomophila (strain L48).